Here is a 440-residue protein sequence, read N- to C-terminus: tRNA-2-methylthio-N(6)-dimethylallyladenosine synthase (440 aa).

One can recognise an MTTase N-terminal domain in the interval K2 to R117. C11, C47, C80, C157, C161, and C164 together coordinate [4Fe-4S] cluster. The region spanning N143–E374 is the Radical SAM core domain. The TRAM domain occupies Q377–A440.

Belongs to the methylthiotransferase family. MiaB subfamily. Monomer. The cofactor is [4Fe-4S] cluster.

The protein resides in the cytoplasm. It catalyses the reaction N(6)-dimethylallyladenosine(37) in tRNA + (sulfur carrier)-SH + AH2 + 2 S-adenosyl-L-methionine = 2-methylsulfanyl-N(6)-dimethylallyladenosine(37) in tRNA + (sulfur carrier)-H + 5'-deoxyadenosine + L-methionine + A + S-adenosyl-L-homocysteine + 2 H(+). Its function is as follows. Catalyzes the methylthiolation of N6-(dimethylallyl)adenosine (i(6)A), leading to the formation of 2-methylthio-N6-(dimethylallyl)adenosine (ms(2)i(6)A) at position 37 in tRNAs that read codons beginning with uridine. The sequence is that of tRNA-2-methylthio-N(6)-dimethylallyladenosine synthase from Wolbachia pipientis subsp. Culex pipiens (strain wPip).